The primary structure comprises 390 residues: 3-ketoacyl-CoA thiolase (390 aa).

The active-site Acyl-thioester intermediate is the C95. Catalysis depends on proton acceptor residues H346 and C376.

Belongs to the thiolase-like superfamily. Thiolase family. In terms of assembly, heterotetramer of two alpha chains (FadB) and two beta chains (FadA).

It localises to the cytoplasm. The enzyme catalyses an acyl-CoA + acetyl-CoA = a 3-oxoacyl-CoA + CoA. It functions in the pathway lipid metabolism; fatty acid beta-oxidation. In terms of biological role, catalyzes the final step of fatty acid oxidation in which acetyl-CoA is released and the CoA ester of a fatty acid two carbons shorter is formed. This is 3-ketoacyl-CoA thiolase from Acinetobacter baumannii (strain ATCC 17978 / DSM 105126 / CIP 53.77 / LMG 1025 / NCDC KC755 / 5377).